The primary structure comprises 231 residues: Urease accessory protein UreF (231 aa).

It belongs to the UreF family. In terms of assembly, ureD, UreF and UreG form a complex that acts as a GTP-hydrolysis-dependent molecular chaperone, activating the urease apoprotein by helping to assemble the nickel containing metallocenter of UreC. The UreE protein probably delivers the nickel.

It is found in the cytoplasm. Required for maturation of urease via the functional incorporation of the urease nickel metallocenter. This chain is Urease accessory protein UreF, found in Marinobacter nauticus (strain ATCC 700491 / DSM 11845 / VT8) (Marinobacter aquaeolei).